A 388-amino-acid polypeptide reads, in one-letter code: UTP--glucose-1-phosphate uridylyltransferase (388 aa).

Asp-118 lines the Mg(2+) pocket.

Belongs to the CugP-type UDP-glucose pyrophosphorylase family. The cofactor is Mg(2+).

It catalyses the reaction alpha-D-glucose 1-phosphate + UTP + H(+) = UDP-alpha-D-glucose + diphosphate. In terms of biological role, catalyzes the formation of UDP-glucose, from UTP and glucose 1-phosphate. Is highly specific since it cannot use other NTPs such as dTTP, CTP, ATP, and GTP, and other sugar-1P such as GlcNAc-1P, Gal-1P, and Man-1P, as substrates. Has probably a central and essential role as the substrate supplier for galactolipid synthesis; galactolipids are major constituents of the photosynthetic thylakoid membrane and important for photosynthetic activity. This chain is UTP--glucose-1-phosphate uridylyltransferase, found in Synechocystis sp. (strain ATCC 27184 / PCC 6803 / Kazusa).